The primary structure comprises 705 residues: Elongation factor G (705 aa).

Residues 6–282 enclose the tr-type G domain; sequence NKVRNIGIMA…AVVDFLPSPL (277 aa). GTP-binding positions include 15–22, 79–83, and 133–136; these read AHIDAGKT, DTPGH, and NKMD.

This sequence belongs to the TRAFAC class translation factor GTPase superfamily. Classic translation factor GTPase family. EF-G/EF-2 subfamily.

Its subcellular location is the cytoplasm. Functionally, catalyzes the GTP-dependent ribosomal translocation step during translation elongation. During this step, the ribosome changes from the pre-translocational (PRE) to the post-translocational (POST) state as the newly formed A-site-bound peptidyl-tRNA and P-site-bound deacylated tRNA move to the P and E sites, respectively. Catalyzes the coordinated movement of the two tRNA molecules, the mRNA and conformational changes in the ribosome. The sequence is that of Elongation factor G from Corynebacterium glutamicum (strain ATCC 13032 / DSM 20300 / JCM 1318 / BCRC 11384 / CCUG 27702 / LMG 3730 / NBRC 12168 / NCIMB 10025 / NRRL B-2784 / 534).